A 196-amino-acid chain; its full sequence is MEPQLILGSSSPRRKSILQYFRIPFTCISPSFEERSVPYQGDPAAYSQELAVGKAESIVQDHNPEGVILTADTVVIYKGKVFNKPSSRDEAIEMLKTLSGQTHSIITSVALLQQKKLMVGQETTQVTFNQLPEKYLGRYVEAFSTLDKCGGYSTQEGGGLIIHNIQGCAYNVQGLPIRTLYHLLLEFDINLWDYLV.

D72 (proton acceptor) is an active-site residue.

This sequence belongs to the Maf family. YhdE subfamily. The cofactor is a divalent metal cation.

It localises to the cytoplasm. The catalysed reaction is dTTP + H2O = dTMP + diphosphate + H(+). It carries out the reaction UTP + H2O = UMP + diphosphate + H(+). Nucleoside triphosphate pyrophosphatase that hydrolyzes dTTP and UTP. May have a dual role in cell division arrest and in preventing the incorporation of modified nucleotides into cellular nucleic acids. This is dTTP/UTP pyrophosphatase from Chlamydia caviae (strain ATCC VR-813 / DSM 19441 / 03DC25 / GPIC) (Chlamydophila caviae).